We begin with the raw amino-acid sequence, 1127 residues long: E3 ubiquitin-protein ligase TRIM33 (1127 aa).

Residues 1 to 18 show a composition bias toward gly residues; that stretch reads MAENKGGGEAESGGGGSG. Positions 1-118 are disordered; sequence MAENKGGGEA…PSAGPPPGPP (118 aa). The interval 1–147 is necessary for E3 ubiquitin-protein ligase activity and repression of SMAD4 signaling and transcriptional repression; that stretch reads MAENKGGGEA…AEPKLLPCLH (147 aa). A compositionally biased stretch (low complexity) spans 19 to 37; the sequence is SAPVTAGAAGPAAQEAEPP. Positions 52–64 are enriched in gly residues; it reads RAGAEGGAAGPDD. Over residues 65 to 97 the composition is skewed to low complexity; the sequence is GGVAAASSGSAQAASSPAASVGTGVAGGAVSTP. Over residues 98–118 the composition is skewed to pro residues; sequence APAPASAPAPGPSAGPPPGPP. The RING-type zinc finger occupies 125–154; sequence CAVCQQSLQSRREAEPKLLPCLHSFCLRCL. B box-type zinc fingers lie at residues 212 to 259 and 271 to 312; these read KSEQ…IRKK and QRPV…YQFL. Positions 217, 220, 241, 245, 276, 279, 299, and 304 each coordinate Zn(2+). The necessary for oligomerization stretch occupies residues 299 to 401; sequence CQLLEHKEHR…QMKLLQQQND (103 aa). Positions 299–401 form a coiled coil; it reads CQLLEHKEHR…QMKLLQQQND (103 aa). Glycyl lysine isopeptide (Lys-Gly) (interchain with G-Cter in SUMO2) cross-links involve residues K329, K334, K481, and K504. Asymmetric dimethylarginine; alternate is present on R515. R515 is modified (omega-N-methylarginine; alternate). K527 is covalently cross-linked (Glycyl lysine isopeptide (Lys-Gly) (interchain with G-Cter in SUMO2)). R535 is subject to Omega-N-methylarginine. The interval 536 to 563 is disordered; it reads MQQPPAPVPTTTTTTQQHPRQAAPQMLQ. Residue R577 is modified to Asymmetric dimethylarginine. Residue R591 is modified to Asymmetric dimethylarginine; alternate. Omega-N-methylarginine; alternate is present on R591. Asymmetric dimethylarginine occurs at positions 598 and 604. Disordered regions lie at residues 608 to 629, 673 to 692, and 703 to 818; these read PQYS…HAGP, NPEN…EDAG, and YISG…TPPL. Low complexity predominate over residues 723 to 759; sequence PSALSPGSSGLSNSHTPVRPPSTSSTGSRGSCGSSGR. K763 and K769 each carry N6-acetyllysine; alternate. Residues K763 and K769 each participate in a glycyl lysine isopeptide (Lys-Gly) (interchain with G-Cter in SUMO2); alternate cross-link. A Glycyl lysine isopeptide (Lys-Gly) (interchain with G-Cter in SUMO2) cross-link involves residue K774. Residues K776 and K793 each participate in a glycyl lysine isopeptide (Lys-Gly) (interchain with G-Cter in SUMO2); alternate cross-link. Glycyl lysine isopeptide (Lys-Gly) (interchain with G-Cter in SUMO1); alternate cross-links involve residues K776 and K793. K793 is subject to N6-acetyllysine; alternate. Over residues 793–802 the composition is skewed to basic and acidic residues; it reads KQEKTEDGRR. A Glycyl lysine isopeptide (Lys-Gly) (interchain with G-Cter in SUMO2) cross-link involves residue K796. S803 carries the post-translational modification Phosphoserine. The segment covering 807-818 has biased composition (low complexity); that stretch reads LSSPESSLTPPL. T815 carries the post-translational modification Phosphothreonine. Residue K861 forms a Glycyl lysine isopeptide (Lys-Gly) (interchain with G-Cter in SUMO2) linkage. S862 carries the post-translational modification Phosphoserine. The PHD-type zinc finger occupies 887–934; it reads EDWCAVCQNGGDLLCCEKCPKVFHLTCHVPTLLSFPSGDWICTFCRDI. Position 951 is an N6-acetyllysine (K951). Residue K953 is modified to N6-acetyllysine; alternate. K953 is covalently cross-linked (Glycyl lysine isopeptide (Lys-Gly) (interchain with G-Cter in SUMO2); alternate). Residues 957–1080 enclose the Bromo domain; the sequence is GLSPVDQRKC…LYFEDKLTEI (124 aa). Glycyl lysine isopeptide (Lys-Gly) (interchain with G-Cter in SUMO2) cross-links involve residues K1007 and K1043. At T1051 the chain carries Phosphothreonine. K1057 participates in a covalent cross-link: Glycyl lysine isopeptide (Lys-Gly) (interchain with G-Cter in SUMO2). A disordered region spans residues 1088–1127; it reads PLPEFEQEEDDGEVTEDSDEDFIQPRRKRLKSDERPVHIK. A compositionally biased stretch (acidic residues) spans 1092-1109; sequence FEQEEDDGEVTEDSDEDF. The residue at position 1102 (T1102) is a Phosphothreonine. S1105 carries the post-translational modification Phosphoserine. Residue K1118 forms a Glycyl lysine isopeptide (Lys-Gly) (interchain with G-Cter in SUMO2) linkage. Basic and acidic residues predominate over residues 1118-1127; the sequence is KSDERPVHIK. S1119 is modified (phosphoserine).

The protein belongs to the TRIM/RBCC family. As to quaternary structure, homooligomer and heterooligomer with TRIM24 and TRIM28 family members. Interacts with SMAD4 in unstimulated cells. Found in a complex with SMAD2 and SMAD3 upon addition of TGF-beta. Interacts with SMAD2 and SMAD3. Interacts with SMAD4 under basal and induced conditions and, upon TGF-beta signaling, with activated SMAD2. Forms a ternary complex with SMAD4 and SMAD2 upon TGF-beta signaling. In terms of processing, sumoylated with SUMO1. Expressed in stem cells at the bottom of the crypts of the colon (at protein level). Expressed in colon adenomas and adenocarcinomas (at protein level). Expressed in brain, lung, liver, spleen, thymus, prostate, kidney, testis, heart, placenta, pancreas, small intestine, ovary, colon, skeletal muscle and hematopoietic progenitors.

Its subcellular location is the nucleus. The enzyme catalyses S-ubiquitinyl-[E2 ubiquitin-conjugating enzyme]-L-cysteine + [acceptor protein]-L-lysine = [E2 ubiquitin-conjugating enzyme]-L-cysteine + N(6)-ubiquitinyl-[acceptor protein]-L-lysine.. It functions in the pathway protein modification; protein ubiquitination. Functionally, acts as an E3 ubiquitin-protein ligase. Promotes SMAD4 ubiquitination, nuclear exclusion and degradation via the ubiquitin proteasome pathway. According to PubMed:16751102, does not promote a decrease in the level of endogenous SMAD4. May act as a transcriptional repressor. Inhibits the transcriptional response to TGF-beta/BMP signaling cascade. Plays a role in the control of cell proliferation. Its association with SMAD2 and SMAD3 stimulates erythroid differentiation of hematopoietic stem/progenitor. Monoubiquitinates SMAD4 and acts as an inhibitor of SMAD4-dependent TGF-beta/BMP signaling cascade (Monoubiquitination of SMAD4 hampers its ability to form a stable complex with activated SMAD2/3 resulting in inhibition of TGF-beta/BMP signaling cascade). This is E3 ubiquitin-protein ligase TRIM33 (TRIM33) from Homo sapiens (Human).